Consider the following 224-residue polypeptide: Small ribosomal subunit protein uS5 (224 aa).

Positions 1–38 (MAEQSAGGQGAPEGRDSRDSREGRGRRDGGRGGRDSDK) are disordered. Positions 13-38 (EGRDSRDSREGRGRRDGGRGGRDSDK) are enriched in basic and acidic residues. Residues 41–104 (YLERVVAINR…EEARKGFFRV (64 aa)) enclose the S5 DRBM domain.

The protein belongs to the universal ribosomal protein uS5 family. In terms of assembly, part of the 30S ribosomal subunit. Contacts proteins S4 and S8.

With S4 and S12 plays an important role in translational accuracy. In terms of biological role, located at the back of the 30S subunit body where it stabilizes the conformation of the head with respect to the body. The polypeptide is Small ribosomal subunit protein uS5 (Mycobacterium ulcerans (strain Agy99)).